We begin with the raw amino-acid sequence, 869 residues long: Valine--tRNA ligase (869 aa).

The 'HIGH' region signature appears at 51–61 (PNVTGNLHLGH). The 'KMSKS' region signature appears at 523–527 (KMSKS). An ATP-binding site is contributed by Lys526. Residues 797–869 (EDLLGSNNEA…ELEKLLSSHK (73 aa)) are a coiled coil.

Belongs to the class-I aminoacyl-tRNA synthetase family. ValS type 1 subfamily. Monomer.

It localises to the cytoplasm. The catalysed reaction is tRNA(Val) + L-valine + ATP = L-valyl-tRNA(Val) + AMP + diphosphate. Catalyzes the attachment of valine to tRNA(Val). As ValRS can inadvertently accommodate and process structurally similar amino acids such as threonine, to avoid such errors, it has a 'posttransfer' editing activity that hydrolyzes mischarged Thr-tRNA(Val) in a tRNA-dependent manner. This chain is Valine--tRNA ligase, found in Malacoplasma penetrans (strain HF-2) (Mycoplasma penetrans).